We begin with the raw amino-acid sequence, 358 residues long: MSAYCGKYKDELIKNAAYIGTPGKGILAADESTGTIGKRFASINVENVEENRRSLRELLFCTPGALQYLSGVILFEETLYQKTKDGKPFVDVLKEGGVLPGIKVDKGTIEVAGTEKETTTQGHDDLGKRCAKYYEAGARFAKWRAVLKIGPNEPSQLAIDLNAQGLARYAIICQENGLVPIVEPEILVDGPHDIDRCAYVSEVVLAACYKALNEHHVLLEGTLLKPNMVTPGSDAKKVSPEVIAEYTVRTLQRTVPAAVPAIVFLSGGQSEEEATLNLNAMNKLSTKKPWSLSFSFGRALQQSTLKAWSGKAENIEKARAAFLTRCKANSEATLGTYKGDAVLGEGASESLHVKDYKY.

Arginine 39 contributes to the substrate binding site. The active-site Proton acceptor is glutamate 183. Lysine 225 functions as the Schiff-base intermediate with dihydroxyacetone-P in the catalytic mechanism. Substrate is bound by residues 266 to 268 and arginine 298; that span reads SGG.

The protein belongs to the class I fructose-bisphosphate aldolase family. As to quaternary structure, homotetramer. As to expression, expressed in callus.

The protein resides in the cytoplasm. Its subcellular location is the cytosol. The catalysed reaction is beta-D-fructose 1,6-bisphosphate = D-glyceraldehyde 3-phosphate + dihydroxyacetone phosphate. It functions in the pathway carbohydrate degradation; glycolysis; D-glyceraldehyde 3-phosphate and glycerone phosphate from D-glucose: step 4/4. Its function is as follows. Fructose-bisphosphate aldolase that plays a key role in glycolysis and gluconeogenesis. Involved in gibberellin-mediated root growth. May be regulated by CDPK13. Associates with vacuolar proton ATPase (V-ATPase) and may regulate the V-ATPase-mediated control of root cell elongation. This is Fructose-bisphosphate aldolase 1, cytoplasmic from Oryza sativa subsp. japonica (Rice).